The sequence spans 431 residues: Serine--tRNA ligase (431 aa).

236 to 238 (TAE) contacts L-serine. 267–269 (RSE) serves as a coordination point for ATP. L-serine is bound at residue E290. Residue 354–357 (EISS) participates in ATP binding. S389 contributes to the L-serine binding site.

Belongs to the class-II aminoacyl-tRNA synthetase family. Type-1 seryl-tRNA synthetase subfamily. Homodimer. The tRNA molecule binds across the dimer.

It is found in the cytoplasm. The catalysed reaction is tRNA(Ser) + L-serine + ATP = L-seryl-tRNA(Ser) + AMP + diphosphate + H(+). The enzyme catalyses tRNA(Sec) + L-serine + ATP = L-seryl-tRNA(Sec) + AMP + diphosphate + H(+). The protein operates within aminoacyl-tRNA biosynthesis; selenocysteinyl-tRNA(Sec) biosynthesis; L-seryl-tRNA(Sec) from L-serine and tRNA(Sec): step 1/1. Functionally, catalyzes the attachment of serine to tRNA(Ser). Is also able to aminoacylate tRNA(Sec) with serine, to form the misacylated tRNA L-seryl-tRNA(Sec), which will be further converted into selenocysteinyl-tRNA(Sec). The sequence is that of Serine--tRNA ligase from Janthinobacterium sp. (strain Marseille) (Minibacterium massiliensis).